The following is a 130-amino-acid chain: Large ribosomal subunit protein eL32 (130 aa).

Belongs to the eukaryotic ribosomal protein eL32 family.

The chain is Large ribosomal subunit protein eL32 (rpl32e) from Pyrococcus abyssi (strain GE5 / Orsay).